Consider the following 343-residue polypeptide: Transmembrane protein 120A (343 aa).

The Cytoplasmic portion of the chain corresponds to methionine 1–glutamate 132. Lysine 130 serves as a coordination point for CoA. Residues tyrosine 133 to arginine 152 traverse the membrane as a helical segment. At phenylalanine 153–arginine 158 the chain is on the extracellular side. A helical transmembrane segment spans residues valine 159–isoleucine 177. The Cytoplasmic segment spans residues arginine 178 to lysine 190. CoA contacts are provided by serine 187 and arginine 188. A helical membrane pass occupies residues glycine 191–threonine 209. Over tryptophan 210 to lysine 218 the chain is Extracellular. A helical membrane pass occupies residues phenylalanine 219–tyrosine 240. Positions 237, 240, 241, and 283 each coordinate CoA. Over glutamine 241 to arginine 270 the chain is Cytoplasmic. A helical transmembrane segment spans residues glycine 271 to phenylalanine 294. Residues asparagine 295 to glutamate 304 lie on the Extracellular side of the membrane. A helical transmembrane segment spans residues tryptophan 305 to histidine 330. Residues histidine 331 to aspartate 343 lie on the Cytoplasmic side of the membrane. Residue lysine 332 participates in CoA binding.

It belongs to the TMEM120 family. Homodimer. Forms heterooligomer with TMEM120B. Interacts with PKD2; TMEM120A inhibits PKD2 channel activity through the physical association of PKD2 with TMEM120A. Interacts (via C-terminal domain) with STING1; regulates the trafficking of STING1 from the ER to the ER-Golgi intermediate compartment to elicit antiviral effects. In terms of tissue distribution, expressed in nociceptors.

It localises to the cell membrane. Its subcellular location is the nucleus inner membrane. The protein localises to the endoplasmic reticulum. Functionally, multifunctional protein involved in mechanosensation, and plays an essential role in lipid metabolism and adipocyte differentiation. May function as a potential ion channel involved in sensing mechanical stimuli. Mediates the mechanosensitivity of the PKD2-TMEM120A channel complex through direct physical interaction. TMEM120A seems to affect mechanosensation by inhibiting PIEZO2 channels, possibly by altering cellular lipid content. TMEM120A is structurally similar to a lipid-modifying enzyme, ELOVL7, and contains a bound coenzyme A molecule, which suggests it might function as an enzyme in lipid metabolism. Additionnaly, implicated in innate immune response against Zika virus. Acts as a key activator of the antiviral signaling involving STING1. This Homo sapiens (Human) protein is Transmembrane protein 120A.